Consider the following 479-residue polypeptide: Glutamyl-tRNA(Gln) amidotransferase subunit A (479 aa).

Active-site charge relay system residues include Lys75 and Ser150. Ser174 functions as the Acyl-ester intermediate in the catalytic mechanism.

It belongs to the amidase family. GatA subfamily. In terms of assembly, heterotrimer of A, B and C subunits.

The enzyme catalyses L-glutamyl-tRNA(Gln) + L-glutamine + ATP + H2O = L-glutaminyl-tRNA(Gln) + L-glutamate + ADP + phosphate + H(+). In terms of biological role, allows the formation of correctly charged Gln-tRNA(Gln) through the transamidation of misacylated Glu-tRNA(Gln) in organisms which lack glutaminyl-tRNA synthetase. The reaction takes place in the presence of glutamine and ATP through an activated gamma-phospho-Glu-tRNA(Gln). This chain is Glutamyl-tRNA(Gln) amidotransferase subunit A, found in Synechococcus sp. (strain ATCC 27144 / PCC 6301 / SAUG 1402/1) (Anacystis nidulans).